The primary structure comprises 867 residues: Valine--tRNA ligase (867 aa).

Residues 42-52 (PNITGKIHMGH) carry the 'HIGH' region motif. The 'KMSKS' region motif lies at 521–525 (KMSKS). Lys-524 is an ATP binding site. The stretch at 794-867 (LGTLIDVKSE…QIISDLEAKA (74 aa)) forms a coiled coil.

This sequence belongs to the class-I aminoacyl-tRNA synthetase family. ValS type 1 subfamily. In terms of assembly, monomer.

The protein resides in the cytoplasm. It carries out the reaction tRNA(Val) + L-valine + ATP = L-valyl-tRNA(Val) + AMP + diphosphate. Functionally, catalyzes the attachment of valine to tRNA(Val). As ValRS can inadvertently accommodate and process structurally similar amino acids such as threonine, to avoid such errors, it has a 'posttransfer' editing activity that hydrolyzes mischarged Thr-tRNA(Val) in a tRNA-dependent manner. The polypeptide is Valine--tRNA ligase (Fervidobacterium nodosum (strain ATCC 35602 / DSM 5306 / Rt17-B1)).